Here is a 451-residue protein sequence, read N- to C-terminus: Cysteine protease ATG4 (451 aa).

The active-site Nucleophile is Cys-122. Catalysis depends on residues Asp-297 and His-299.

This sequence belongs to the peptidase C54 family. As to quaternary structure, interacts with ATG8.

It localises to the cytoplasm. The protein resides in the nucleus. It is found in the preautophagosomal structure. It catalyses the reaction [protein]-C-terminal L-amino acid-glycyl-phosphatidylethanolamide + H2O = [protein]-C-terminal L-amino acid-glycine + a 1,2-diacyl-sn-glycero-3-phosphoethanolamine. Cysteine protease that plays a key role in cytoplasm to vacuole transport (Cvt) and autophagy by mediating both proteolytic activation and delipidation of ATG8. Required for selective autophagic degradation of the nucleus (nucleophagy) as well as for mitophagy which contributes to regulate mitochondrial quantity and quality by eliminating the mitochondria to a basal level to fulfill cellular energy requirements and preventing excess ROS production. The protease activity is required for proteolytic activation of ATG8: cleaves the C-terminal amino acid of ATG8 to reveal a C-terminal glycine. ATG8 ubiquitin-like activity requires the exposure of the glycine at the C-terminus for its conjugation to phosphatidylethanolamine (PE) and its insertion to membranes, which is necessary for autophagy. The ATG8-PE conjugate mediates tethering between adjacent membranes and stimulates membrane hemifusion, leading to expansion of the autophagosomal membrane during autophagy. In addition to the protease activity, also catalyzes deconjugation of PE-conjugated forms of ATG8 during macroautophagy: ATG8 delipidation is required to release the protein from membranes, which facilitates multiple events during macroautophagy, and especially for efficient autophagosome biogenesis, the assembly of ATG9-containing tubulovesicular clusters into phagophores/autophagosomes, and for the disassembly of PAS-associated ATG components. ATG8 delipidation by ATG4 also recycles ATG8-PE generated on inappropriate membranes to maintain a reservoir of unlipidated ATG8 that is required for autophagosome formation at the PAS. The sequence is that of Cysteine protease ATG4 from Kluyveromyces marxianus (strain DMKU3-1042 / BCC 29191 / NBRC 104275) (Yeast).